The sequence spans 436 residues: 3-ketoacyl-CoA thiolase (436 aa).

Cys99 (acyl-thioester intermediate) is an active-site residue. Active-site proton acceptor residues include His392 and Cys422.

The protein belongs to the thiolase-like superfamily. Thiolase family. In terms of assembly, heterotetramer of two alpha chains (FadJ) and two beta chains (FadI).

It localises to the cytoplasm. It carries out the reaction an acyl-CoA + acetyl-CoA = a 3-oxoacyl-CoA + CoA. Its pathway is lipid metabolism; fatty acid beta-oxidation. Catalyzes the final step of fatty acid oxidation in which acetyl-CoA is released and the CoA ester of a fatty acid two carbons shorter is formed. The sequence is that of 3-ketoacyl-CoA thiolase from Shigella boydii serotype 18 (strain CDC 3083-94 / BS512).